Here is a 401-residue protein sequence, read N- to C-terminus: MSESAFAERIVHNLLDTDFYKLTMMQGVLHNYPDADVEWEFRCRNGEDLRPYLGEIRNQLERLGDLTLDDGQLAFLERISFLKPDFLRFLRLFRFNLRYVHVGIENDQLFLRLKGPWLHVILFEVPLLAIISEVRNRNLHPHMRLAEARDQLYRKFDWLRAHASDDELAELQVADFGTRRRFSSRVQEEVVRVLRDDFPGRFVGTSNVDLAWKLDIKPLGTMAHEWIMAHQQLGPRLIDSQIAALDCWVREYRGLLGIALTDCITMDAFLGDFDLYFAKLFDGLRHDSGEPVAWAEKAIAHYQKLGIDPMTKTLVFSDGLNLTRSLEIFRALRGRINVSFGIGTNLTCDIPGVAPMSIVLKMTDCNGAPVAKISDEAAKTQCRDENFVAYMRHVFKVPSKE.

At histidine 224 the chain carries Phosphohistidine; by autocatalysis.

The protein belongs to the NAPRTase family. Transiently phosphorylated on a His residue during the reaction cycle. Phosphorylation strongly increases the affinity for substrates and increases the rate of nicotinate D-ribonucleotide production. Dephosphorylation regenerates the low-affinity form of the enzyme, leading to product release.

It catalyses the reaction nicotinate + 5-phospho-alpha-D-ribose 1-diphosphate + ATP + H2O = nicotinate beta-D-ribonucleotide + ADP + phosphate + diphosphate. The protein operates within cofactor biosynthesis; NAD(+) biosynthesis; nicotinate D-ribonucleotide from nicotinate: step 1/1. Its function is as follows. Catalyzes the synthesis of beta-nicotinate D-ribonucleotide from nicotinate and 5-phospho-D-ribose 1-phosphate at the expense of ATP. The chain is Nicotinate phosphoribosyltransferase from Pseudomonas putida (strain ATCC 700007 / DSM 6899 / JCM 31910 / BCRC 17059 / LMG 24140 / F1).